We begin with the raw amino-acid sequence, 831 residues long: DNA replication licensing factor MCM6 (831 aa).

The C4-type zinc-finger motif lies at 155 to 182 (CLDCGSVIKNVEQQFKYTQPTICVSPTC). A disordered region spans residues 258 to 278 (GERAECRRDSSQQKSSTAGHE). Residues 259-268 (ERAECRRDSS) show a composition bias toward basic and acidic residues. Residues 345–551 (YFNKLVGSMA…VTDYHIAHHI (207 aa)) form the MCM domain. 395-402 (GDPSCAKS) contacts ATP. The short motif at 527–530 (SRFD) is the Arginine finger element. Residues 666–705 (SEYQDANGDNMDDTDDIENPVDGEEDQQNGAAEPASATAD) form a disordered region. Residues 675–692 (NMDDTDDIENPVDGEEDQ) are compositionally biased toward acidic residues.

Belongs to the MCM family. In terms of assembly, component of the minichromosome maintenance (MCM) complex, a heterotetramer composed of MCM2, MCM3, MCM4, MCM5, MCM6 and MCM7. Interacts with ETG1. In terms of tissue distribution, expressed in shoot apex and flower buds.

The protein resides in the nucleus. The enzyme catalyses ATP + H2O = ADP + phosphate + H(+). In terms of biological role, probable component of the MCM2-7 complex (MCM complex) that may function as a DNA helicase and which is essential to undergo a single round of replication initiation and elongation per cell cycle in eukaryotic cells. This is DNA replication licensing factor MCM6 (MCM6) from Arabidopsis thaliana (Mouse-ear cress).